The following is a 786-amino-acid chain: Kazrin-A (786 aa).

The segment at 44–70 (EEPGEPQEHQQQQQQQNHQDAPVQRQK) is disordered. Residues 52–62 (HQQQQQQQNHQ) show a composition bias toward low complexity. The stretch at 92-270 (LLHEEVLRLQ…SLATLTKDVP (179 aa)) forms a coiled coil. A disordered region spans residues 350-425 (MSDASVMEGE…LFDDSDSLSS (76 aa)). 3 consecutive SAM domains span residues 457–522 (WRAG…YRDA), 535–599 (DHHW…LHTL), and 623–686 (WTCQ…SEEM). Positions 703–760 (PLGTPPTLHRQSSLSSSSPSCHDDQQSLRRVKQQLGLSPKNLTARNISHQSRSGSFPR) are disordered. A compositionally biased stretch (polar residues) spans 742–758 (KNLTARNISHQSRSGSF).

This sequence belongs to the kazrin family.

The protein is Kazrin-A (kazna) of Danio rerio (Zebrafish).